Consider the following 82-residue polypeptide: Beta-defensin 113 (82 aa).

An N-terminal signal peptide occupies residues 1 to 16 (MKILCIFLTFFFTVSC). Intrachain disulfides connect Cys35–Cys61, Cys42–Cys56, and Cys46–Cys62.

The protein belongs to the beta-defensin family.

It localises to the secreted. Has antibacterial activity. The polypeptide is Beta-defensin 113 (DEFB113) (Pan troglodytes (Chimpanzee)).